A 138-amino-acid polypeptide reads, in one-letter code: MLIPKRVKYRRQHRPHRSGVSKGGNRVTFGDYGLQALEPTYITNRQIESARIAINRHMKRGGKVWINIFPDRPLTQKPLGVRMGSGKGPVEKWVANVKPGRILFEASYPNEEVALEALRRAGNKLPCKVRIVKKEDQF.

Residues 1–19 show a composition bias toward basic residues; sequence MLIPKRVKYRRQHRPHRSG. Positions 1–24 are disordered; it reads MLIPKRVKYRRQHRPHRSGVSKGG.

The protein belongs to the universal ribosomal protein uL16 family. As to quaternary structure, part of the 50S ribosomal subunit.

In terms of biological role, binds 23S rRNA and is also seen to make contacts with the A and possibly P site tRNAs. This Corynebacterium jeikeium (strain K411) protein is Large ribosomal subunit protein uL16.